The chain runs to 131 residues: D-ribose pyranase (131 aa).

The Proton donor role is filled by H20. Substrate-binding positions include D28, H98, and 120–122 (FSN).

Belongs to the RbsD / FucU family. RbsD subfamily. Homodecamer.

The protein resides in the cytoplasm. It carries out the reaction beta-D-ribopyranose = beta-D-ribofuranose. It participates in carbohydrate metabolism; D-ribose degradation; D-ribose 5-phosphate from beta-D-ribopyranose: step 1/2. Catalyzes the interconversion of beta-pyran and beta-furan forms of D-ribose. This chain is D-ribose pyranase, found in Petrotoga mobilis (strain DSM 10674 / SJ95).